We begin with the raw amino-acid sequence, 625 residues long: 1-deoxy-D-xylulose-5-phosphate synthase (625 aa).

Residues His80 and 121-123 each bind thiamine diphosphate; that span reads GHS. Asp152 provides a ligand contact to Mg(2+). Thiamine diphosphate contacts are provided by residues 153–154, Asn181, Tyr290, and Glu371; that span reads GA. A Mg(2+)-binding site is contributed by Asn181.

Belongs to the transketolase family. DXPS subfamily. Homodimer. Requires Mg(2+) as cofactor. The cofactor is thiamine diphosphate.

It catalyses the reaction D-glyceraldehyde 3-phosphate + pyruvate + H(+) = 1-deoxy-D-xylulose 5-phosphate + CO2. The protein operates within metabolic intermediate biosynthesis; 1-deoxy-D-xylulose 5-phosphate biosynthesis; 1-deoxy-D-xylulose 5-phosphate from D-glyceraldehyde 3-phosphate and pyruvate: step 1/1. Catalyzes the acyloin condensation reaction between C atoms 2 and 3 of pyruvate and glyceraldehyde 3-phosphate to yield 1-deoxy-D-xylulose-5-phosphate (DXP). The protein is 1-deoxy-D-xylulose-5-phosphate synthase of Haemophilus influenzae (strain 86-028NP).